Here is a 69-residue protein sequence, read N- to C-terminus: Cytochrome b-c1 complex subunit 6 (69 aa).

2 disulfides stabilise this stretch: cysteine 17-cysteine 59 and cysteine 31-cysteine 45.

The protein belongs to the UQCRH/QCR6 family. As to quaternary structure, component of the ubiquinol-cytochrome c oxidoreductase (cytochrome b-c1 complex, complex III, CIII), a multisubunit enzyme composed of 3 respiratory subunits cytochrome b, cytochrome c1 and Rieske protein, 2 core protein subunits, and additional low-molecular weight protein subunits. The complex exists as an obligatory dimer and forms supercomplexes (SCs) in the inner mitochondrial membrane with cytochrome c oxidase (complex IV, CIV).

Its subcellular location is the mitochondrion inner membrane. In terms of biological role, component of the ubiquinol-cytochrome c oxidoreductase, a multisubunit transmembrane complex that is part of the mitochondrial electron transport chain which drives oxidative phosphorylation. The respiratory chain contains 3 multisubunit complexes succinate dehydrogenase (complex II, CII), ubiquinol-cytochrome c oxidoreductase (cytochrome b-c1 complex, complex III, CIII) and cytochrome c oxidase (complex IV, CIV), that cooperate to transfer electrons derived from NADH and succinate to molecular oxygen, creating an electrochemical gradient over the inner membrane that drives transmembrane transport and the ATP synthase. The cytochrome b-c1 complex catalyzes electron transfer from ubiquinol to cytochrome c, linking this redox reaction to translocation of protons across the mitochondrial inner membrane, with protons being carried across the membrane as hydrogens on the quinol. In the process called Q cycle, 2 protons are consumed from the matrix, 4 protons are released into the intermembrane space and 2 electrons are passed to cytochrome c. This Solanum tuberosum (Potato) protein is Cytochrome b-c1 complex subunit 6.